Consider the following 540-residue polypeptide: CWF19-like protein 1 (540 aa).

Positions 265–326 (ENPYRKSDKD…AKQPRKHPQP (62 aa)) are disordered. A compositionally biased stretch (basic and acidic residues) spans 267–277 (PYRKSDKDTPK).

Belongs to the CWF19 family.

This chain is CWF19-like protein 1 (cwf19l1), found in Xenopus laevis (African clawed frog).